A 274-amino-acid chain; its full sequence is Large ribosomal subunit protein uL2 (274 aa).

Residues 223–256 (VVMNPVDHPHGGGEGKTGEGRHPVDPWGNLTKGY) form a disordered region. Residues 229-246 (DHPHGGGEGKTGEGRHPV) show a composition bias toward basic and acidic residues.

The protein belongs to the universal ribosomal protein uL2 family. As to quaternary structure, part of the 50S ribosomal subunit. Forms a bridge to the 30S subunit in the 70S ribosome.

Functionally, one of the primary rRNA binding proteins. Required for association of the 30S and 50S subunits to form the 70S ribosome, for tRNA binding and peptide bond formation. It has been suggested to have peptidyltransferase activity; this is somewhat controversial. Makes several contacts with the 16S rRNA in the 70S ribosome. This chain is Large ribosomal subunit protein uL2, found in Variovorax paradoxus (strain S110).